We begin with the raw amino-acid sequence, 111 residues long: UPF0342 protein SAG1376 (111 aa).

Polar residues predominate over residues 52–63 (QEMMQSGQMPSQ). The tract at residues 52–71 (QEMMQSGQMPSQEEQDEMSK) is disordered.

It belongs to the UPF0342 family.

In Streptococcus agalactiae serotype V (strain ATCC BAA-611 / 2603 V/R), this protein is UPF0342 protein SAG1376.